The chain runs to 864 residues: Alanine--tRNA ligase (864 aa).

The Zn(2+) site is built by H553, H557, C655, and H659. Residues 828–847 (VGGKGGGRPDMAQAGGKDPS) are disordered.

It belongs to the class-II aminoacyl-tRNA synthetase family. The cofactor is Zn(2+).

The protein resides in the cytoplasm. The enzyme catalyses tRNA(Ala) + L-alanine + ATP = L-alanyl-tRNA(Ala) + AMP + diphosphate. Functionally, catalyzes the attachment of alanine to tRNA(Ala) in a two-step reaction: alanine is first activated by ATP to form Ala-AMP and then transferred to the acceptor end of tRNA(Ala). Also edits incorrectly charged Ser-tRNA(Ala) and Gly-tRNA(Ala) via its editing domain. In Hydrogenovibrio crunogenus (strain DSM 25203 / XCL-2) (Thiomicrospira crunogena), this protein is Alanine--tRNA ligase.